Here is a 407-residue protein sequence, read N- to C-terminus: Formate-dependent phosphoribosylglycinamide formyltransferase (407 aa).

N(1)-(5-phospho-beta-D-ribosyl)glycinamide is bound by residues 28–29 and glutamate 88; that span reads EL. Residues arginine 121, lysine 162, 167 to 172, 202 to 205, and glutamate 210 each bind ATP; these read SSGKGQ and EGFI. The ATP-grasp domain occupies 126–320; it reads RLAAEELGVA…EFELHAKAIL (195 aa). Mg(2+) is bound by residues glutamate 279 and glutamate 291. N(1)-(5-phospho-beta-D-ribosyl)glycinamide-binding positions include aspartate 298, lysine 367, and 374-375; that span reads RR.

The protein belongs to the PurK/PurT family. As to quaternary structure, homodimer.

The enzyme catalyses N(1)-(5-phospho-beta-D-ribosyl)glycinamide + formate + ATP = N(2)-formyl-N(1)-(5-phospho-beta-D-ribosyl)glycinamide + ADP + phosphate + H(+). It functions in the pathway purine metabolism; IMP biosynthesis via de novo pathway; N(2)-formyl-N(1)-(5-phospho-D-ribosyl)glycinamide from N(1)-(5-phospho-D-ribosyl)glycinamide (formate route): step 1/1. In terms of biological role, involved in the de novo purine biosynthesis. Catalyzes the transfer of formate to 5-phospho-ribosyl-glycinamide (GAR), producing 5-phospho-ribosyl-N-formylglycinamide (FGAR). Formate is provided by PurU via hydrolysis of 10-formyl-tetrahydrofolate. The polypeptide is Formate-dependent phosphoribosylglycinamide formyltransferase (Herminiimonas arsenicoxydans).